An 88-amino-acid polypeptide reads, in one-letter code: MAHKKGQGSTQNNRDSAGRRLGVKKFGSEFVRAGNIIVRQRGTKMHPGNNVGMGKDHTLYALIDGVVKFEHKDRNRKKVSVVSQNFGE.

The tract at residues 1 to 21 (MAHKKGQGSTQNNRDSAGRRL) is disordered.

The protein belongs to the bacterial ribosomal protein bL27 family.

The polypeptide is Large ribosomal subunit protein bL27 (Helicobacter pylori (strain P12)).